The primary structure comprises 216 residues: ATP-dependent Clp protease proteolytic subunit (216 aa).

Ser109 functions as the Nucleophile in the catalytic mechanism. His134 is a catalytic residue.

The protein belongs to the peptidase S14 family. As to quaternary structure, fourteen ClpP subunits assemble into 2 heptameric rings which stack back to back to give a disk-like structure with a central cavity, resembling the structure of eukaryotic proteasomes.

The protein localises to the cytoplasm. It carries out the reaction Hydrolysis of proteins to small peptides in the presence of ATP and magnesium. alpha-casein is the usual test substrate. In the absence of ATP, only oligopeptides shorter than five residues are hydrolyzed (such as succinyl-Leu-Tyr-|-NHMec, and Leu-Tyr-Leu-|-Tyr-Trp, in which cleavage of the -Tyr-|-Leu- and -Tyr-|-Trp bonds also occurs).. Functionally, cleaves peptides in various proteins in a process that requires ATP hydrolysis. Has a chymotrypsin-like activity. Plays a major role in the degradation of misfolded proteins. In Rhodospirillum rubrum (strain ATCC 11170 / ATH 1.1.1 / DSM 467 / LMG 4362 / NCIMB 8255 / S1), this protein is ATP-dependent Clp protease proteolytic subunit.